Here is a 621-residue protein sequence, read N- to C-terminus: Kininogen-1 (621 aa).

A signal peptide spans 1–18; sequence MKLITILFLCSRLLPSLT. A Cystatin kininogen-type 1 domain is found at 27 to 131; it reads CNDQDVFKAV…IQTCLITPAE (105 aa). Cystine bridges form between Cys-27–Cys-591, Cys-82–Cys-93, Cys-106–Cys-125, Cys-141–Cys-144, Cys-205–Cys-217, Cys-228–Cys-247, Cys-263–Cys-266, Cys-327–Cys-339, and Cys-350–Cys-369. N-linked (GlcNAc...) asparagine glycosylation is found at Asn-47 and Asn-87. Thr-136 is a glycosylation site (O-linked (GalNAc...) threonine; partial). The Cystatin kininogen-type 2 domain occupies 150–253; the sequence is TKSPDLEPVL…SQKCDLYPVK (104 aa). Residues Asn-168 and Asn-169 are each glycosylated (N-linked (GlcNAc...) asparagine). An N-linked (GlcNAc...) asparagine; partial glycan is attached at Asn-197. N-linked (GlcNAc...) asparagine glycosylation occurs at Asn-204. Residues 272-375 form the Cystatin kininogen-type 3 domain; the sequence is VDSPDLEEPL…TVNCQPLGQT (104 aa). At Ser-331 the chain carries Phosphoserine. The interval 396–497 is disordered; that stretch reads EGSTTVSLPH…GKNNGKHYDW (102 aa). O-linked (GalNAc...) serine glycosylation occurs at Ser-398. O-linked (GalNAc...) threonine glycans are attached at residues Thr-399 and Thr-400. Ser-406 carries an O-linked (GalNAc...) serine glycan. A compositionally biased stretch (basic residues) spans 444 to 492; that stretch reads GHKHKHDQGHGHHGSHGLGHGHQKQHGLGHGHKHGHGHGKHKNKGKNNG. Ser-512 carries O-linked (GalNAc...) serine glycosylation. 6 O-linked (GalNAc...) threonine glycosylation sites follow: Thr-520, Thr-524, Thr-536, Thr-548, Thr-553, and Thr-570. A glycan (O-linked (GalNAc...) serine) is linked at Ser-581.

Post-translationally, bradykinin is released from kininogen by plasma kallikrein. In terms of processing, phosphorylated by FAM20C in the extracellular medium. Bradykinin is inactivated by ACE, which removes the dipeptide Arg-Phe from its C-terminus. In terms of tissue distribution, plasma.

It localises to the secreted. The protein resides in the extracellular space. Kininogens are inhibitors of thiol proteases. HMW-kininogen plays an important role in blood coagulation by helping to position optimally prekallikrein and factor XI next to factor XII; HMW-kininogen inhibits the thrombin- and plasmin-induced aggregation of thrombocytes. LMW-kininogen inhibits the aggregation of thrombocytes. LMW-kininogen is in contrast to HMW-kininogen not involved in blood clotting. In terms of biological role, the active peptide bradykinin is a potent vasodilatator that is released from HMW-kininogen shows a variety of physiological effects: (A) influence in smooth muscle contraction, (B) induction of hypotension, (C) natriuresis and diuresis, (D) decrease in blood glucose level, (E) it is a mediator of inflammation and causes (E1) increase in vascular permeability, (E2) stimulation of nociceptors (4E3) release of other mediators of inflammation (e.g. prostaglandins), (F) it has a cardioprotective effect (directly via bradykinin action, indirectly via endothelium-derived relaxing factor action). The protein is Kininogen-1 (KNG1) of Bos taurus (Bovine).